The primary structure comprises 502 residues: Glucose-6-phosphate isomerase (502 aa).

The active-site Proton donor is glutamate 331. Active-site residues include histidine 362 and lysine 471.

It belongs to the GPI family.

Its subcellular location is the cytoplasm. It catalyses the reaction alpha-D-glucose 6-phosphate = beta-D-fructose 6-phosphate. It functions in the pathway carbohydrate biosynthesis; gluconeogenesis. Its pathway is carbohydrate degradation; glycolysis; D-glyceraldehyde 3-phosphate and glycerone phosphate from D-glucose: step 2/4. Functionally, catalyzes the reversible isomerization of glucose-6-phosphate to fructose-6-phosphate. In Xylella fastidiosa (strain M12), this protein is Glucose-6-phosphate isomerase.